The sequence spans 208 residues: Small ribosomal subunit protein uS4 (208 aa).

The 63-residue stretch at 98-160 folds into the S4 RNA-binding domain; that stretch reads RRLDNVVYRM…SKNNVQIQRA (63 aa).

The protein belongs to the universal ribosomal protein uS4 family. As to quaternary structure, part of the 30S ribosomal subunit. Contacts protein S5. The interaction surface between S4 and S5 is involved in control of translational fidelity.

One of the primary rRNA binding proteins, it binds directly to 16S rRNA where it nucleates assembly of the body of the 30S subunit. In terms of biological role, with S5 and S12 plays an important role in translational accuracy. The chain is Small ribosomal subunit protein uS4 from Nautilia profundicola (strain ATCC BAA-1463 / DSM 18972 / AmH).